The following is a 54-amino-acid chain: Ovomucoid (54 aa).

The region spanning 4–54 is the Kazal-like domain; sequence VDCSDYPKPACTLEYMPLCGSDNKTYGNRCNFCNAVVDSNGTLTLSHFGKC. 3 disulfides stabilise this stretch: Cys6/Cys36, Cys14/Cys33, and Cys22/Cys54. N-linked (GlcNAc...) asparagine glycosylation occurs at Asn43.

It localises to the secreted. The sequence is that of Ovomucoid from Dendrocygna viduata (White-faced whistling-duck).